Here is a 366-residue protein sequence, read N- to C-terminus: Reticulon-4-interacting protein 1, mitochondrial (366 aa).

Residues 1 to 20 (MIEKMILRRFFSTKSSTMRA) constitute a mitochondrion transit peptide.

The protein belongs to the zinc-containing alcohol dehydrogenase family. Quinone oxidoreductase subfamily. Expressed in pharynx, muscles and intestine.

It is found in the mitochondrion. Its function is as follows. Plays a role in oxygen metabolism in the mitochondria by regulating the levels of reactive oxygen species (ROS) thereby conferring resistance to oxidative stress. Involved in resistance to P.aeruginosa PA14 infection. Regulates lifespan. This is Reticulon-4-interacting protein 1, mitochondrial from Caenorhabditis elegans.